The sequence spans 127 residues: Fluoride-specific ion channel FluC (127 aa).

Transmembrane regions (helical) follow at residues leucine 8–phenylalanine 28, proline 37–isoleucine 57, tryptophan 68–tyrosine 88, and isoleucine 100–glycine 120. Residues glycine 78 and threonine 81 each coordinate Na(+).

The protein belongs to the fluoride channel Fluc/FEX (TC 1.A.43) family.

It is found in the cell inner membrane. The catalysed reaction is fluoride(in) = fluoride(out). Na(+) is not transported, but it plays an essential structural role and its presence is essential for fluoride channel function. Fluoride-specific ion channel. Important for reducing fluoride concentration in the cell, thus reducing its toxicity. The chain is Fluoride-specific ion channel FluC from Leptospira interrogans serogroup Icterohaemorrhagiae serovar Lai (strain 56601).